The following is a 333-amino-acid chain: Ribokinase (333 aa).

Substrate is bound by residues 10-12, 38-42, and Glu-149; these read NYD and GKGLN. ATP-binding positions include Asn-193 and 248-253; that span reads TLGSRG. Residues Asp-277 and Thr-279 each contribute to the K(+) site. 282-283 serves as a coordination point for ATP; the sequence is GD. Substrate is bound at residue Asp-283. Asp-283 serves as the catalytic Proton acceptor. Positions 313, 316, 318, and 322 each coordinate K(+).

This sequence belongs to the carbohydrate kinase PfkB family. Ribokinase subfamily. As to quaternary structure, homodimer. It depends on Mg(2+) as a cofactor.

It localises to the cytoplasm. The protein resides in the nucleus. It carries out the reaction D-ribose + ATP = D-ribose 5-phosphate + ADP + H(+). The protein operates within carbohydrate metabolism; D-ribose degradation; D-ribose 5-phosphate from beta-D-ribopyranose: step 2/2. Activated by a monovalent cation that binds near, but not in, the active site. The most likely occupant of the site in vivo is potassium. Ion binding induces a conformational change that may alter substrate affinity. Its function is as follows. Catalyzes the phosphorylation of ribose at O-5 in a reaction requiring ATP and magnesium. The resulting D-ribose-5-phosphate can then be used either for sythesis of nucleotides, histidine, and tryptophan, or as a component of the pentose phosphate pathway. The polypeptide is Ribokinase (Saccharomyces cerevisiae (strain ATCC 204508 / S288c) (Baker's yeast)).